Reading from the N-terminus, the 404-residue chain is Exodeoxyribonuclease 7 large subunit (404 aa).

This sequence belongs to the XseA family. In terms of assembly, heterooligomer composed of large and small subunits.

It is found in the cytoplasm. The enzyme catalyses Exonucleolytic cleavage in either 5'- to 3'- or 3'- to 5'-direction to yield nucleoside 5'-phosphates.. Its function is as follows. Bidirectionally degrades single-stranded DNA into large acid-insoluble oligonucleotides, which are then degraded further into small acid-soluble oligonucleotides. The polypeptide is Exodeoxyribonuclease 7 large subunit (Caldanaerobacter subterraneus subsp. tengcongensis (strain DSM 15242 / JCM 11007 / NBRC 100824 / MB4) (Thermoanaerobacter tengcongensis)).